The sequence spans 82 residues: Delta-actitoxin-Aeq2b 1 (82 aa).

Residues 1-19 (MNRLMILVFAAVILALASA) form the signal peptide. Positions 20–26 (DEDVDIA) are excised as a propeptide. 3 disulfide bridges follow: Cys32/Cys79, Cys34/Cys69, and Cys62/Cys80.

It belongs to the sea anemone sodium channel inhibitory toxin family. Type I subfamily.

Its subcellular location is the secreted. It is found in the nematocyst. Functionally, binds specifically to voltage-gated sodium channels (Nav), thereby delaying their inactivation during signal transduction. Causes death to crabs. This Actinia equina (Beadlet anemone) protein is Delta-actitoxin-Aeq2b 1.